The primary structure comprises 244 residues: Cell adhesion molecule CEACAM4 (244 aa).

The signal sequence occupies residues 1–35; it reads MGPPSAAPRGGHRPWQGLLITASLLTFWHPPTTVQ. One can recognise an Ig-like V-type domain in the interval 36-139; sequence FTIEALPSSA…DSDQATGQLH (104 aa). Residues 36-155 are Extracellular-facing; it reads FTIEALPSSA…PGLPVGAVAG (120 aa). Asn57, Asn104, Asn111, and Asn126 each carry an N-linked (GlcNAc...) asparagine glycan. Residues 156 to 176 form a helical membrane-spanning segment; that stretch reads IVTGVLVGVALVAALVCFLLL. Topologically, residues 177 to 244 are cytoplasmic; sequence SRTGRASIQR…QIDHKADVVS (68 aa). The interval 186–215 is disordered; that stretch reads RDLREQPPPASTPGHGPSHRSTFSAPLPSP. The ITAM motif lies at 222-236; the sequence is YEELLYSDANIYCQI.

This sequence belongs to the immunoglobulin superfamily. CEA family. As to quaternary structure, interacts through its phosphorylated ITAM domain with the SH2 domain-containing cytoplasmic proteins involved in signaling processes during phagocytosis. N-glycosylated. In terms of processing, the cytoplasmic ITAM-like sequence becomes tyrosine phosphorylated by SRC family PTKs upon ligand-mediated receptor clustering and allows to initiate phagocytosis of bound ligand. As to expression, granulocytes.

Its subcellular location is the membrane. In terms of biological role, granulocyte orphan receptor that acts as an trigger efficient phagocytosis of attached particles. The chain is Cell adhesion molecule CEACAM4 from Homo sapiens (Human).